Here is a 120-residue protein sequence, read N- to C-terminus: NAD(P)H-quinone oxidoreductase subunit 3, chloroplastic (120 aa).

Transmembrane regions (helical) follow at residues 9–29, 64–84, and 88–108; these read IFWA…FVSG, MFAL…PWAM, and VLGI…IVGL.

It belongs to the complex I subunit 3 family. In terms of assembly, NDH is composed of at least 16 different subunits, 5 of which are encoded in the nucleus.

The protein resides in the plastid. It is found in the chloroplast thylakoid membrane. The catalysed reaction is a plastoquinone + NADH + (n+1) H(+)(in) = a plastoquinol + NAD(+) + n H(+)(out). It catalyses the reaction a plastoquinone + NADPH + (n+1) H(+)(in) = a plastoquinol + NADP(+) + n H(+)(out). Its function is as follows. NDH shuttles electrons from NAD(P)H:plastoquinone, via FMN and iron-sulfur (Fe-S) centers, to quinones in the photosynthetic chain and possibly in a chloroplast respiratory chain. The immediate electron acceptor for the enzyme in this species is believed to be plastoquinone. Couples the redox reaction to proton translocation, and thus conserves the redox energy in a proton gradient. This chain is NAD(P)H-quinone oxidoreductase subunit 3, chloroplastic, found in Daucus carota (Wild carrot).